Reading from the N-terminus, the 245-residue chain is GTP cyclohydrolase 1 type 2 homolog (245 aa).

Residues His63, His64, Asp100, His213, and Glu217 each contribute to the a divalent metal cation site.

It belongs to the GTP cyclohydrolase I type 2/NIF3 family. Homohexamer.

The sequence is that of GTP cyclohydrolase 1 type 2 homolog from Archaeoglobus fulgidus (strain ATCC 49558 / DSM 4304 / JCM 9628 / NBRC 100126 / VC-16).